The sequence spans 177 residues: Transcription termination/antitermination protein NusG (177 aa).

The KOW domain maps to Glu128–Val156.

This sequence belongs to the NusG family.

In terms of biological role, participates in transcription elongation, termination and antitermination. Stimulates RNA polymerase pausing at U107 and U144 in the trp leader. NusG-stimulated pausing is sequence specific. Does not affect trp leader termination. This Bacillus subtilis (strain 168) protein is Transcription termination/antitermination protein NusG.